Reading from the N-terminus, the 427-residue chain is Glutamate-1-semialdehyde 2,1-aminomutase (427 aa).

Lysine 268 is subject to N6-(pyridoxal phosphate)lysine.

This sequence belongs to the class-III pyridoxal-phosphate-dependent aminotransferase family. HemL subfamily. Pyridoxal 5'-phosphate serves as cofactor.

The protein resides in the cytoplasm. The catalysed reaction is (S)-4-amino-5-oxopentanoate = 5-aminolevulinate. It functions in the pathway porphyrin-containing compound metabolism; protoporphyrin-IX biosynthesis; 5-aminolevulinate from L-glutamyl-tRNA(Glu): step 2/2. The chain is Glutamate-1-semialdehyde 2,1-aminomutase from Methanococcus maripaludis (strain DSM 14266 / JCM 13030 / NBRC 101832 / S2 / LL).